The sequence spans 323 residues: D-alanine--D-alanine ligase (323 aa).

Residues 105-305 (KQQLVPRGIP…YEDLVEAIVE (201 aa)) form the ATP-grasp domain. 131 to 188 (PLARPYVLKPVNEGSSVGVAIVTDESNYGNPIRRDAPGPWQEFRELLAEPFIRGRELT) contacts ATP. Residues Asp-256, Glu-272, and Asn-274 each contribute to the Mg(2+) site.

The protein belongs to the D-alanine--D-alanine ligase family. The cofactor is Mg(2+). Requires Mn(2+) as cofactor.

Its subcellular location is the cytoplasm. The catalysed reaction is 2 D-alanine + ATP = D-alanyl-D-alanine + ADP + phosphate + H(+). It participates in cell wall biogenesis; peptidoglycan biosynthesis. Cell wall formation. This chain is D-alanine--D-alanine ligase, found in Erythrobacter litoralis (strain HTCC2594).